We begin with the raw amino-acid sequence, 197 residues long: Large ribosomal subunit protein bL17 (197 aa).

Residues 136–197 form a disordered region; that stretch reads RAAKKADAPQ…DAEKSSDTEK (62 aa). Over residues 148–187 the composition is skewed to acidic residues; sequence VADEATDADESVEDEAPAQDDSADEVEAAADETPADDAEA. Positions 188–197 are enriched in basic and acidic residues; the sequence is DAEKSSDTEK.

The protein belongs to the bacterial ribosomal protein bL17 family. Part of the 50S ribosomal subunit. Contacts protein L32.

The sequence is that of Large ribosomal subunit protein bL17 from Beutenbergia cavernae (strain ATCC BAA-8 / DSM 12333 / CCUG 43141 / JCM 11478 / NBRC 16432 / NCIMB 13614 / HKI 0122).